An 889-amino-acid polypeptide reads, in one-letter code: Coatomer subunit gamma-2 (889 aa).

HEAT repeat units follow at residues 67 to 102 (VEAT…SPSA), 103 to 140 (DEVI…STLL), 289 to 326 (RELT…THPL), 328 to 360 (VTNC…TGNE), and 361 to 398 (SSVD…KFPL). The interval 596-617 (PLAEKKTTGKKPTGPASALSGP) is disordered.

The protein belongs to the COPG family. Oligomeric complex that consists of at least the alpha, beta, beta', gamma, delta, epsilon and zeta subunits.

Its subcellular location is the cytoplasm. The protein localises to the golgi apparatus membrane. It localises to the cytoplasmic vesicle. The protein resides in the COPI-coated vesicle membrane. In terms of biological role, the coatomer is a cytosolic protein complex that binds to dilysine motifs and reversibly associates with Golgi non-clathrin-coated vesicles, which further mediate biosynthetic protein transport from the ER, via the Golgi up to the trans Golgi network. Coatomer complex is required for budding from Golgi membranes, and is essential for the retrograde Golgi-to-ER transport of dilysine-tagged proteins. This is Coatomer subunit gamma-2 from Oryza sativa subsp. japonica (Rice).